The sequence spans 922 residues: MSDLAREITPINIEEELKSSYLDYAMSVIVGRALPDVRDGLKPVHRRVLFAMNELGNDWNKPYKKSARVVGDVIGKYHPHGDSAVYDTIVRLAQDFSMRYMLVDGQGNFGSVDGDSAAAMRYTEVRMARISHELLADLDKETVDWVPNYDGTEMIPAVMPTKVPNLLVNGSSGIAVGMAWNIPPHNLTEIVNGCLALIENGNLTIDELMTYITGPDFPTGAIINGRAGIVQAYRTGRGSVYVRAKAEVEVDDKTSRETIIIVHELPYQVNKARLIEKIAELVKEKKVEGISALRDESDKDACRIVIEIKRGESGEIVLNNLYKHTQLQTTFGINMVALDNNQPKVMNLKDILDAFLLHRREVVTRRTVFELRKARDRAHILEGLAVALANIDPIIELIRHSDTPADAKAKLVARGWELGNVAAMLEKAGDDAARPEWLEPEFGIREGQYFLTEQQAQAILDLRLHKLTGLEHGKILEEYQSLLDLIAELLFILASPERLMEVIRDELLAVREQYGDERPPEISASSAEINIEDLITPEDVVVTLSHQGYVKYQPITDYEAQRRGGRGKSATRIKEENFVERLLVANTHDTILCFSTRGKVYWLKVYQLPEASRGARGRPIINLLPLEEGERITAILPVKEYADDKYVFFATADGTVKKTSLSAFSRPLSSGIRAINLKEGDELIGVDITDGSNEIMLFSDAGKVVRFNEGSAAPMQPMLMSSDDVDGDDESVIDAGNDDDGSDNGEGSESTESKGTFKGVRPMGRTAGGVRGIRLLNGDKVVSLIVPRGEGAILTATENGYGKGTALTEYPTKSRGTQGVRSIKVDEDGKVSIDQVDDTDQIMLITNGGTLVRTRVSEVSIIGRNTGGVRLIRTGEDETVVGLQRIAESYEEENDVMAIDGEVSEGTDTAPDAGSAAADPEE.

Positions 34–534 (LPDVRDGLKP…SSAEINIEDL (501 aa)) constitute a Topo IIA-type catalytic domain. Residue Y122 is the O-(5'-phospho-DNA)-tyrosine intermediate of the active site. The GyrA-box signature appears at 561–567 (QRRGGRG). Disordered stretches follow at residues 715-763 (MQPM…VRPM) and 899-922 (IDGEVSEGTDTAPDAGSAAADPEE). Residues 723–743 (DDVDGDDESVIDAGNDDDGSD) are compositionally biased toward acidic residues.

Belongs to the type II topoisomerase GyrA/ParC subunit family. In terms of assembly, heterotetramer, composed of two GyrA and two GyrB chains. In the heterotetramer, GyrA contains the active site tyrosine that forms a transient covalent intermediate with DNA, while GyrB binds cofactors and catalyzes ATP hydrolysis.

Its subcellular location is the cytoplasm. The enzyme catalyses ATP-dependent breakage, passage and rejoining of double-stranded DNA.. In terms of biological role, a type II topoisomerase that negatively supercoils closed circular double-stranded (ds) DNA in an ATP-dependent manner to modulate DNA topology and maintain chromosomes in an underwound state. Negative supercoiling favors strand separation, and DNA replication, transcription, recombination and repair, all of which involve strand separation. Also able to catalyze the interconversion of other topological isomers of dsDNA rings, including catenanes and knotted rings. Type II topoisomerases break and join 2 DNA strands simultaneously in an ATP-dependent manner. In Aeromonas salmonicida, this protein is DNA gyrase subunit A.